The chain runs to 332 residues: D-alanine--D-alanine ligase (332 aa).

The segment covering Met-1–Val-17 has biased composition (polar residues). Residues Met-1 to Thr-28 form a disordered region. Over residues Ser-18–Thr-28 the composition is skewed to low complexity. The 198-residue stretch at Lys-132–Ala-329 folds into the ATP-grasp domain. Val-158 to Thr-213 serves as a coordination point for ATP. Residues Asp-283, Glu-296, and Asn-298 each coordinate Mg(2+).

It belongs to the D-alanine--D-alanine ligase family. It depends on Mg(2+) as a cofactor. Mn(2+) is required as a cofactor.

The protein localises to the cytoplasm. The enzyme catalyses 2 D-alanine + ATP = D-alanyl-D-alanine + ADP + phosphate + H(+). It participates in cell wall biogenesis; peptidoglycan biosynthesis. In terms of biological role, cell wall formation. This is D-alanine--D-alanine ligase from Psychrobacter sp. (strain PRwf-1).